Reading from the N-terminus, the 61-residue chain is Small ribosomal subunit protein uS14 (61 aa).

C24, C27, C40, and C43 together coordinate Zn(2+).

It belongs to the universal ribosomal protein uS14 family. Zinc-binding uS14 subfamily. As to quaternary structure, part of the 30S ribosomal subunit. Contacts proteins S3 and S10. Zn(2+) is required as a cofactor.

Binds 16S rRNA, required for the assembly of 30S particles and may also be responsible for determining the conformation of the 16S rRNA at the A site. The chain is Small ribosomal subunit protein uS14 from Borrelia duttonii (strain Ly).